Consider the following 1022-residue polypeptide: Protein trachealess (1022 aa).

Residues 86-139 (LRKEKSRDAARSRRGKENYEFYELAKMLPLPAAITSQLDKASIIRLTISYLKLR) enclose the bHLH domain. Positions 174-244 (EQHQGTHILQ…DQLGLSLTSG (71 aa)) constitute a PAS 1 domain. The segment at 239-289 (LSLTSGGGGGGGSSSSGGGGGGAGGGMASPTSGASDDGSGTHGTNNPDVAA) is disordered. The span at 243–265 (SGGGGGGGSSSSGGGGGGAGGGM) shows a compositional bias: gly residues. Residues 280 to 289 (HGTNNPDVAA) are compositionally biased toward polar residues. Positions 391–461 (PPPSVHEIRL…KSHSDLIEKG (71 aa)) constitute a PAS 2 domain. The 44-residue stretch at 465–508 (TGYYRLMNKSGGYTWLQTCATVVCSTKNADEQNIICVNYVISNR) folds into the PAC domain. Disordered stretches follow at residues 525–686 (DSIK…ADSA), 849–896 (AMTP…GDVV), and 962–996 (DDQG…ASQA). Low complexity-rich tracts occupy residues 578-587 (RSAAASHGSS) and 611-625 (PTTV…TPPV). The short motif at 629–636 (KRKRKTKA) is the Nuclear localization signal element. Ser673 is modified (phosphoserine; by PKB/Akt1). The segment covering 851–864 (TPPSSVSPRDSNQP) has biased composition (polar residues). The span at 987-996 (GSAGSSASQA) shows a compositional bias: low complexity.

Efficient DNA binding requires dimerization with another bHLH protein. Heterodimer with tgo. In terms of processing, ser-673 phosphorylation by PKB/Akt1 is required for nuclear targeting and transcriptional activity. In terms of tissue distribution, trachea, salivary gland ducts, posterior spiracles (Filzkoeper primordia) and a subset of cells in the CNS.

It is found in the nucleus. Transcription factor, master regulator of tracheal cell fates in the embryo, necessary for the development of the salivary gland duct, Malpighian tubules and the posterior spiracles. It may induce a general fate of branched tubular structures of epithelial origin. Functions with tgo to regulate expression of btl. This is Protein trachealess (trh) from Drosophila melanogaster (Fruit fly).